We begin with the raw amino-acid sequence, 181 residues long: Probable pyruvoyl-dependent arginine decarboxylase (181 aa).

At S43 the chain carries Pyruvic acid (Ser).

The protein belongs to the PdaD family. Pyruvate serves as cofactor.

It carries out the reaction L-arginine + H(+) = agmatine + CO2. The chain is Probable pyruvoyl-dependent arginine decarboxylase from Chlorobium limicola (strain DSM 245 / NBRC 103803 / 6330).